The following is a 130-amino-acid chain: Holo-[acyl-carrier-protein] synthase (130 aa).

Mg(2+) is bound by residues Asp8 and Glu62.

This sequence belongs to the P-Pant transferase superfamily. AcpS family. The cofactor is Mg(2+).

The protein localises to the cytoplasm. It catalyses the reaction apo-[ACP] + CoA = holo-[ACP] + adenosine 3',5'-bisphosphate + H(+). Transfers the 4'-phosphopantetheine moiety from coenzyme A to a Ser of acyl-carrier-protein. The polypeptide is Holo-[acyl-carrier-protein] synthase (Variovorax paradoxus (strain S110)).